The following is a 193-amino-acid chain: MLIGYVRVSTNDQNTDLQRNALVCAGCEQIFEDKLSGTRTDRPGLKRALKRLQKGDTLVVWKLDRLGRSMKHLISLVGELRERGINFRSLTDSIDTSSPMGRFFFHVMGALAEMERELIIERTMAGLAAARNKGRIGGRPPKLTKAEWEQAGRLLAQGIPRKQVALIYDVALSTLYKKHPAKRAHIENDDRIN.

The Resolvase/invertase-type recombinase catalytic domain occupies 1 to 134; that stretch reads MLIGYVRVST…AGLAAARNKG (134 aa). Catalysis depends on Ser9, which acts as the O-(5'-phospho-DNA)-serine intermediate. Positions 138–183 form a DNA-binding region, H-T-H motif; sequence GRPPKLTKAEWEQAGRLLAQGIPRKQVALIYDVALSTLYKKHPAKR.

This sequence belongs to the site-specific recombinase resolvase family. Homodimer. During inversion, two dimers associate to form a homotetramer.

Its subcellular location is the host cytoplasm. Performs inversion of a viral 3 kp segment (G-segment) that encodes two alternate pairs of tail fiber proteins thereby modifying the host specificity of the virus. Binds as a dimer to the viral gix sites which are 34-bp palindromic sequences that flank the invertible G-segment. Catalyzes site-specific recombination in the presence of the host factor Fis. Gin dimers bound to each of the gix sites and host factor Fis bound to the enhancer come together to form the synaptic complex. Each Gin monomer introduces a nick and becomes covalently attached to the 5'-phosphate of the DNA, resulting in double-stranded staggered breaks at both recombination sites. A 180 degrees rotation of one of the two Gin dimers followed by religation of the DNA leads to the inversion of the G-segment (G+ or G- orientation). This chain is Serine recombinase gin (gin), found in Escherichia phage Mu (Bacteriophage Mu).